A 419-amino-acid polypeptide reads, in one-letter code: UDP-N-acetylglucosamine 1-carboxyvinyltransferase (419 aa).

22-23 lines the phosphoenolpyruvate pocket; the sequence is KN. Position 93 (Arg93) interacts with UDP-N-acetyl-alpha-D-glucosamine. The active-site Proton donor is Cys117. Cys117 bears the 2-(S-cysteinyl)pyruvic acid O-phosphothioketal mark. Residues Asp306 and Ile328 each contribute to the UDP-N-acetyl-alpha-D-glucosamine site.

Belongs to the EPSP synthase family. MurA subfamily.

The protein resides in the cytoplasm. It catalyses the reaction phosphoenolpyruvate + UDP-N-acetyl-alpha-D-glucosamine = UDP-N-acetyl-3-O-(1-carboxyvinyl)-alpha-D-glucosamine + phosphate. It participates in cell wall biogenesis; peptidoglycan biosynthesis. Cell wall formation. Adds enolpyruvyl to UDP-N-acetylglucosamine. The chain is UDP-N-acetylglucosamine 1-carboxyvinyltransferase from Idiomarina loihiensis (strain ATCC BAA-735 / DSM 15497 / L2-TR).